A 320-amino-acid chain; its full sequence is MQNRNTFSWVKEQMTRFISVSIMIYVITRTSISNAYPIFAQQGYENPREATGRIVCANCHLANKPVDIEVPQAVLPDTVFEAVVRIPYDMQLKQVLANGKKGSLNVGAVLILPDGFELAPPDRISPEMKEKIGNLSFQSYRPTKKNILVIGPVPGQKYSEIVFPILSPDPATKKDVNFLKYPIYVGGNRGRGQIYPDGSKSNNTVYNATGAGIVSRIVRKEKGGYEITIADASDGHQVIDIIPPGPELLVSEGESIKLDQPLTNNPNVGGFGQGDAEIVLQDPLRVQGLLFFLASVILAQIFLVLKKKQFEKVQLSEMNF.

The N-terminal stretch at 1–35 (MQNRNTFSWVKEQMTRFISVSIMIYVITRTSISNA) is a signal peptide. 4 residues coordinate heme: Tyr-36, Cys-56, Cys-59, and His-60. Residues 286 to 306 (VQGLLFFLASVILAQIFLVLK) form a helical membrane-spanning segment.

This sequence belongs to the cytochrome f family. In terms of assembly, the 4 large subunits of the cytochrome b6-f complex are cytochrome b6, subunit IV (17 kDa polypeptide, petD), cytochrome f and the Rieske protein, while the 4 small subunits are PetG, PetL, PetM and PetN. The complex functions as a dimer. Heme serves as cofactor.

It localises to the plastid. It is found in the chloroplast thylakoid membrane. Component of the cytochrome b6-f complex, which mediates electron transfer between photosystem II (PSII) and photosystem I (PSI), cyclic electron flow around PSI, and state transitions. This Drimys granadensis protein is Cytochrome f.